Reading from the N-terminus, the 147-residue chain is Large ribosomal subunit protein uL16 (147 aa).

Basic residues predominate over residues Met1–Arg16. The tract at residues Met1 to Gln20 is disordered.

The protein belongs to the universal ribosomal protein uL16 family. As to quaternary structure, part of the 50S ribosomal subunit.

In terms of biological role, binds 23S rRNA and is also seen to make contacts with the A and possibly P site tRNAs. The protein is Large ribosomal subunit protein uL16 of Alkaliphilus metalliredigens (strain QYMF).